The sequence spans 282 residues: 3-methyl-2-oxobutanoate hydroxymethyltransferase (282 aa).

2 residues coordinate Mg(2+): D44 and D83. Residues 44–45, D83, and K112 each bind 3-methyl-2-oxobutanoate; that span reads DS. Residue E114 coordinates Mg(2+). E181 (proton acceptor) is an active-site residue.

This sequence belongs to the PanB family. Homodecamer; pentamer of dimers. Mg(2+) serves as cofactor.

It localises to the cytoplasm. It carries out the reaction 3-methyl-2-oxobutanoate + (6R)-5,10-methylene-5,6,7,8-tetrahydrofolate + H2O = 2-dehydropantoate + (6S)-5,6,7,8-tetrahydrofolate. The protein operates within cofactor biosynthesis; coenzyme A biosynthesis. Functionally, catalyzes the reversible reaction in which hydroxymethyl group from 5,10-methylenetetrahydrofolate is transferred onto alpha-ketoisovalerate to form ketopantoate. This Pyrococcus abyssi (strain GE5 / Orsay) protein is 3-methyl-2-oxobutanoate hydroxymethyltransferase.